Here is a 428-residue protein sequence, read N- to C-terminus: D-amino acid dehydrogenase (428 aa).

3-17 (VVILGSGVVGVASAY) contacts FAD.

It belongs to the DadA oxidoreductase family. Requires FAD as cofactor.

The enzyme catalyses a D-alpha-amino acid + A + H2O = a 2-oxocarboxylate + AH2 + NH4(+). The protein operates within amino-acid degradation; D-alanine degradation; NH(3) and pyruvate from D-alanine: step 1/1. Functionally, oxidative deamination of D-amino acids. This is D-amino acid dehydrogenase from Burkholderia thailandensis (strain ATCC 700388 / DSM 13276 / CCUG 48851 / CIP 106301 / E264).